A 95-amino-acid chain; its full sequence is Small ribosomal subunit protein mS37 (95 aa).

In terms of domain architecture, CHCH spans 27-69; the sequence is ANKCLVLMSNLLQCWSSYGHMSPKCAGLVTELKSCTSESALGK. Short sequence motifs (cx9C motif) lie at residues 30–40 and 51–61; these read CLVLMSNLLQC and CAGLVTELKSC. Cystine bridges form between Cys30/Cys61 and Cys40/Cys51.

It belongs to the mitochondrion-specific ribosomal protein mS37 family. In terms of assembly, component of the mitochondrial small ribosomal subunit (mt-SSU). Mature yeast 74S mitochondrial ribosomes consist of a small (37S) and a large (54S) subunit. The 37S small subunit contains a 15S ribosomal RNA (15S mt-rRNA) and 34 different proteins. The 54S large subunit contains a 21S rRNA (21S mt-rRNA) and 46 different proteins.

The protein localises to the mitochondrion. It localises to the mitochondrion matrix. Functionally, component of the mitochondrial ribosome (mitoribosome), a dedicated translation machinery responsible for the synthesis of mitochondrial genome-encoded proteins, including at least some of the essential transmembrane subunits of the mitochondrial respiratory chain. The mitoribosomes are attached to the mitochondrial inner membrane and translation products are cotranslationally integrated into the membrane. This Saccharomyces cerevisiae (strain ATCC 204508 / S288c) (Baker's yeast) protein is Small ribosomal subunit protein mS37 (MRP10).